Consider the following 53-residue polypeptide: uncharacterized protein (53 aa).

This is an uncharacterized protein from Archaeoglobus fulgidus (strain ATCC 49558 / DSM 4304 / JCM 9628 / NBRC 100126 / VC-16).